The following is a 154-amino-acid chain: Superoxide dismutase [Cu-Zn] (154 aa).

Cu cation contacts are provided by His47, His49, and His64. Cys58 and Cys147 are disulfide-bonded. Zn(2+) contacts are provided by His64, His72, His81, and Asp84. Residue His121 coordinates Cu cation. Arg144 provides a ligand contact to substrate.

Belongs to the Cu-Zn superoxide dismutase family. In terms of assembly, homodimer. Cu cation is required as a cofactor. The cofactor is Zn(2+).

The protein resides in the cytoplasm. It carries out the reaction 2 superoxide + 2 H(+) = H2O2 + O2. Functionally, destroys radicals which are normally produced within the cells and which are toxic to biological systems. This chain is Superoxide dismutase [Cu-Zn] (SOD1), found in Podospora anserina (Pleurage anserina).